A 105-amino-acid chain; its full sequence is Small ribosomal subunit protein uS10 (105 aa).

Belongs to the universal ribosomal protein uS10 family. In terms of assembly, part of the 30S ribosomal subunit.

Involved in the binding of tRNA to the ribosomes. This chain is Small ribosomal subunit protein uS10, found in Desulfovibrio desulfuricans (strain ATCC 27774 / DSM 6949 / MB).